Consider the following 488-residue polypeptide: N-succinylglutamate 5-semialdehyde dehydrogenase (488 aa).

Position 221–226 (221–226) interacts with NAD(+); the sequence is GSSRTG. Catalysis depends on residues Glu244 and Cys278.

This sequence belongs to the aldehyde dehydrogenase family. AstD subfamily.

The enzyme catalyses N-succinyl-L-glutamate 5-semialdehyde + NAD(+) + H2O = N-succinyl-L-glutamate + NADH + 2 H(+). Its pathway is amino-acid degradation; L-arginine degradation via AST pathway; L-glutamate and succinate from L-arginine: step 4/5. Catalyzes the NAD-dependent reduction of succinylglutamate semialdehyde into succinylglutamate. This Pseudomonas syringae pv. syringae (strain B728a) protein is N-succinylglutamate 5-semialdehyde dehydrogenase.